The following is an 882-amino-acid chain: Valine--tRNA ligase (882 aa).

The 'HIGH' region signature appears at 42–52; sequence PNVTGKLHLGH. The 'KMSKS' region motif lies at 522 to 526; it reads KMSKS. Lys525 serves as a coordination point for ATP. Residues 849-873 adopt a coiled-coil conformation; that stretch reads KIEIEKKKYESYCKQYKKLLESKNN.

It belongs to the class-I aminoacyl-tRNA synthetase family. ValS type 1 subfamily. Monomer.

Its subcellular location is the cytoplasm. The catalysed reaction is tRNA(Val) + L-valine + ATP = L-valyl-tRNA(Val) + AMP + diphosphate. Its function is as follows. Catalyzes the attachment of valine to tRNA(Val). As ValRS can inadvertently accommodate and process structurally similar amino acids such as threonine, to avoid such errors, it has a 'posttransfer' editing activity that hydrolyzes mischarged Thr-tRNA(Val) in a tRNA-dependent manner. The chain is Valine--tRNA ligase from Onion yellows phytoplasma (strain OY-M).